Here is a 321-residue protein sequence, read N- to C-terminus: Gibberellin 2-beta-dioxygenase 4 (321 aa).

Residues 156–269 (DSDSVLRVNH…RLSTAYFAGP (114 aa)) form the Fe2OG dioxygenase domain. Fe cation is bound by residues histidine 193, aspartate 195, and histidine 250. Arginine 260 is an active-site residue.

This sequence belongs to the iron/ascorbate-dependent oxidoreductase family. GA2OX subfamily. Fe(2+) serves as cofactor. In terms of tissue distribution, expressed at the base of the shoot apical meristem and developing leaf primordia.

It carries out the reaction gibberellin A1 + 2-oxoglutarate + O2 = gibberellin A8 + succinate + CO2. It participates in plant hormone biosynthesis; gibberellin biosynthesis. In terms of biological role, catalyzes the 2-beta-hydroxylation of several biologically active gibberellins, leading to the homeostatic regulation of their endogenous level. Catabolism of gibberellins (GAs) plays a central role in plant development. Converts GA9/GA20 to GA51/GA29 and GA4/GA1 to GA34/GA8. The sequence is that of Gibberellin 2-beta-dioxygenase 4 (GA2OX4) from Arabidopsis thaliana (Mouse-ear cress).